Consider the following 473-residue polypeptide: Ribulose bisphosphate carboxylase large chain (473 aa).

Residues asparagine 116 and threonine 166 each contribute to the substrate site. Catalysis depends on lysine 168, which acts as the Proton acceptor. Position 170 (lysine 170) interacts with substrate. The Mg(2+) site is built by lysine 194, aspartate 196, and glutamate 197. N6-carboxylysine is present on lysine 194. Histidine 287 acts as the Proton acceptor in catalysis. Positions 288, 320, and 372 each coordinate substrate.

Belongs to the RuBisCO large chain family. Type I subfamily. As to quaternary structure, heterohexadecamer of 8 large chains and 8 small chains. Requires Mg(2+) as cofactor.

The catalysed reaction is 2 (2R)-3-phosphoglycerate + 2 H(+) = D-ribulose 1,5-bisphosphate + CO2 + H2O. The enzyme catalyses D-ribulose 1,5-bisphosphate + O2 = 2-phosphoglycolate + (2R)-3-phosphoglycerate + 2 H(+). RuBisCO catalyzes two reactions: the carboxylation of D-ribulose 1,5-bisphosphate, the primary event in carbon dioxide fixation, as well as the oxidative fragmentation of the pentose substrate. Both reactions occur simultaneously and in competition at the same active site. The sequence is that of Ribulose bisphosphate carboxylase large chain from Nitrosomonas sp. (strain ENI-11).